A 747-amino-acid chain; its full sequence is Elongation factor G, mitochondrial (747 aa).

A mitochondrion-targeting transit peptide spans 1 to 32 (MTLITRVLNGNLPLRLSTLKAARQLQCGYSSH). The 278-residue stretch at 42-319 (ERIRNIGISA…AVVDYLPNPG (278 aa)) folds into the tr-type G domain. Residues 51–58 (AHIDSGKT), 118–122 (DTPGH), and 172–175 (NKLD) each bind GTP.

The protein belongs to the TRAFAC class translation factor GTPase superfamily. Classic translation factor GTPase family. EF-G/EF-2 subfamily.

It is found in the mitochondrion. The protein operates within protein biosynthesis; polypeptide chain elongation. In terms of biological role, mitochondrial GTPase that catalyzes the GTP-dependent ribosomal translocation step during translation elongation. During this step, the ribosome changes from the pre-translocational (PRE) to the post-translocational (POST) state as the newly formed A-site-bound peptidyl-tRNA and P-site-bound deacylated tRNA move to the P and E sites, respectively. Catalyzes the coordinated movement of the two tRNA molecules, the mRNA and conformational changes in the ribosome. Essential during development as it acts as a retrograde signal from mitochondria to the nucleus to slow down cell proliferation if mitochondrial energy output is low. The protein is Elongation factor G, mitochondrial of Drosophila mojavensis (Fruit fly).